A 420-amino-acid chain; its full sequence is Putative FBD-associated F-box protein At1g78730 (420 aa).

Positions 21 to 71 (LDWLRKLPDSLLCQVFLNLPTKDVVKTSVLSSTWGNIWRSVPGLDLGYGDF) constitute an F-box domain. The FBD domain occupies 341 to 390 (ISILPGPQCNLPALEFVDILKPMVEKETELKLMSYFLEKSTILKKLTLRL).

The sequence is that of Putative FBD-associated F-box protein At1g78730 from Arabidopsis thaliana (Mouse-ear cress).